The sequence spans 453 residues: DNA repair protein RadA (453 aa).

The segment at 11–28 adopts a C4-type zinc-finger fold; sequence CNQCGATAPKWLGQCPGC. 93–100 is a binding site for ATP; it reads GDPGIGKS. The short motif at 250–254 is the RadA KNRFG motif element; sequence KNRFG. The segment at 349–453 is lon-protease-like; sequence DVFLSITGGL…TIKDAIRLLL (105 aa).

Belongs to the RecA family. RadA subfamily.

In terms of biological role, DNA-dependent ATPase involved in processing of recombination intermediates, plays a role in repairing DNA breaks. Stimulates the branch migration of RecA-mediated strand transfer reactions, allowing the 3' invading strand to extend heteroduplex DNA faster. Binds ssDNA in the presence of ADP but not other nucleotides, has ATPase activity that is stimulated by ssDNA and various branched DNA structures, but inhibited by SSB. Does not have RecA's homology-searching function. This chain is DNA repair protein RadA, found in Chlamydia pneumoniae (Chlamydophila pneumoniae).